The chain runs to 160 residues: MCDNSCFCENKQDTIDESLDKTCIFCTIAKGDDRYTEILAEDEDFVCFRDINPGAPHHYLVIPKKHIYSCLSLYADDISLVRGMAEMGRNVLKANNVTDLKDISLGFHVPPYITVPHLHLHVLAPYSQLYKWAINKFRTNWYINEEKTVEILMKGKTQMV.

Residues 24-132 enclose the HIT domain; the sequence is IFCTIAKGDD…LAPYSQLYKW (109 aa). AMP-binding positions include 50-51 and 119-121; these read DI and HLH. Residues 117–121 carry the Histidine triad motif motif; the sequence is HLHLH. His-119 serves as the catalytic Tele-AMP-histidine intermediate.

It belongs to the HINT family. Forms dimers to octamers and even larger oligomer.

The protein localises to the cytoplasm. It is found in the nucleus. It carries out the reaction adenosine 5'-phosphoramidate + H2O = AMP + NH4(+). In terms of biological role, exhibits adenosine 5'-monophosphoramidase activity, hydrolyzing purine nucleotide phosphoramidates with a single phosphate group such as adenosine 5'monophosphoramidate (AMP-NH2) to yield AMP and NH2. Hydrolyzes lysyl-AMP (AMP-N-epsilon-(N-alpha-acetyl lysine methyl ester)) generated by lysine tRNA ligase. In Danio rerio (Zebrafish), this protein is Adenosine 5'-monophosphoramidase HINT3 (hint3).